The following is a 467-amino-acid chain: MWRCPLGLLLLLPLAGHLALGAQQGRGRRELAPGLHLRGIRDAGGRYCQEQDLCCRGRADDCALPYLGAICYCDLFCNRTVSDCCPDFWDFCLGVPPPFPPIQGCMHGGRIYPVLGTYWDNCNRCTCQENRQWQCDQEPCLVDPDMIKAINQGNYGWQAGNHSAFWGMTLDEGIRYRLGTIRPSSSVMNMHEIYTVLNPGEVLPTAFEASEKWPNLIHEPLDQGNCAGSWAFSTAAVASDRVSIHSLGHMTPVLSPQNLLSCDTHQQQGCRGGRLDGAWWFLRRRGVVSDHCYPFSGRERDEAGPAPPCMMHSRAMGRGKRQATAHCPNSYVNNNDIYQVTPVYRLGSNDKEIMKELMENGPVQALMEVHEDFFLYKGGIYSHTPVSLGRPERYRRHGTHSVKITGWGEETLPDGRTLKYWTAANSWGPAWGERGHFRIVRGVNECDIESFVLGVWGRVGMEDMGHH.

A signal peptide spans 1–21 (MWRCPLGLLLLLPLAGHLALG). Positions 50–98 (EQDLCCRGRADDCALPYLGAICYCDLFCNRTVSDCCPDFWDFCLGVPPP) constitute an SMB domain. 5 disulfides stabilise this stretch: Cys-54–Cys-73, Cys-71–Cys-73, Cys-71–Cys-85, Cys-77–Cys-84, and Cys-85–Cys-92. Asn-78 carries N-linked (GlcNAc...) asparagine glycosylation. Asn-161 carries N-linked (GlcNAc...) asparagine glycosylation.

The protein belongs to the peptidase C1 family. Post-translationally, glycosylated. Highly expressed in aorta, heart, placenta, kidney and a colorectal adenocarcinoma cell line. Moderately expressed in skeletal muscle, pancreas, lung, lymph nodes, adrenal gland, bone marrow and thyroid. Weakly expressed in colon, small intestine, ovary, spleen, testis and prostate. Predominantly found in vascular smooth muscle cells, but also in cardiac and skeletal muscle cells as well as kidney.

Its subcellular location is the secreted. Its function is as follows. May be implicated in the adrenocortical zonation and in mechanisms for repressing the CYP11B1 gene expression in adrenocortical cells. This is a non catalytic peptidase C1 family protein. This chain is Tubulointerstitial nephritis antigen-like (TINAGL1), found in Homo sapiens (Human).